Consider the following 261-residue polypeptide: Carbonic anhydrase 1 (261 aa).

Residues 1–40 (MASPDWGYDDKNGPEQWSKLYPIANGNNQSPVDIKTSETK) are disordered. A2 is modified (N-acetylalanine). The Alpha-carbonic anhydrase domain occupies 4-261 (PDWGYDDKNG…LKGRTVRASF (258 aa)). H65 serves as the catalytic Proton donor/acceptor. Residues H95, H97, and H120 each contribute to the Zn(2+) site. Substrate-binding positions include T200 and 200 to 201 (TH). The segment at 241 to 261 (PMQHNNRPTQPLKGRTVRASF) is disordered.

Belongs to the alpha-carbonic anhydrase family. It depends on Zn(2+) as a cofactor.

It localises to the cytoplasm. The catalysed reaction is hydrogencarbonate + H(+) = CO2 + H2O. The enzyme catalyses urea = cyanamide + H2O. Its activity is regulated as follows. Inhibited by acetazolamide. Catalyzes the reversible hydration of carbon dioxide. Can hydrate cyanamide to urea. This is Carbonic anhydrase 1 (CA1) from Pan troglodytes (Chimpanzee).